The sequence spans 830 residues: GPI ethanolamine phosphate transferase 2 (830 aa).

The N-terminal stretch at 1-32 is a signal peptide; the sequence is MNLKQFTCLSCAQLLAILLFIFAFFPRKIVLT. Residues 33-321 are Lumenal-facing; that stretch reads GISKQDPDQD…QYLETVQQID (289 aa). N145, N185, and N298 each carry an N-linked (GlcNAc...) asparagine glycan. Residues 322-342 form a helical membrane-spanning segment; the sequence is IVPTIAALFGMPIPMNSVGII. The Cytoplasmic segment spans residues 343–405; it reads IPDFLQLLPN…TKSATNYNYP (63 aa). Residues 406–426 traverse the membrane as a helical segment; sequence LLTLAFVGFLIITIIAIYVLL. The Lumenal segment spans residues 427-439; the sequence is RYSGPDFWQLRVS. Residues 440–460 form a helical membrane-spanning segment; it reads SLSVLLVSIILGVSTFASSFI. Residues 461 to 469 are Cytoplasmic-facing; that stretch reads EEEHQLWWW. A helical transmembrane segment spans residues 470-490; the sequence is IVTAFSAVPLFVYRLNVLIIV. The Lumenal segment spans residues 491-533; it reads RWFIMMACVRSIKFWNNSGQKFIYSNVMSNLLNQNPSWKWCLN. N506 is a glycosylation site (N-linked (GlcNAc...) asparagine). A helical membrane pass occupies residues 534 to 554; the sequence is MLTFLVLIMASAGFQVLHFIV. At 555 to 598 the chain is on the cytoplasmic side; that stretch reads TTILVGLCFTYKISWEIVNGNQAEIPLFMHDLLAKIDFAPTESN. The helical transmembrane segment at 599–619 threads the bilayer; it reads LIVLARVFFQAWAIVVISRLV. The Lumenal portion of the chain corresponds to 620–651; the sequence is LTKLKVLNKNYLIKDMKVYITILLMFQTSSQN. A helical transmembrane segment spans residues 652-672; sequence IGQFLVFQILESQIFYFFQNI. Topologically, residues 673–682 are cytoplasmic; it reads PTASLTSTSK. Residues 683–703 form a helical membrane-spanning segment; the sequence is IYFSNLVSLILQNFTFFQFGG. Topologically, residues 704–724 are lumenal; the sequence is TNSISTIDLGNAYHGVSSDYN. A helical membrane pass occupies residues 725–745; the sequence is IYVVGILMSVANFAPAIYWSM. At 746–768 the chain is on the cytoplasmic side; the sequence is LPWSINYASIPAQVKLQTFIRSK. The helical transmembrane segment at 769-789 threads the bilayer; it reads LPAFTYHCIFGTCLMTACVVL. Topologically, residues 790–805 are lumenal; it reads RFHLFIWSVFSPKLCY. The chain crosses the membrane as a helical span at residues 806–826; that stretch reads FLGWNFVMGLLNGWLPELALL. The Cytoplasmic portion of the chain corresponds to 827 to 830; it reads CALD.

This sequence belongs to the PIGG/PIGN/PIGO family. PIGG subfamily. N-glycosylated.

It is found in the endoplasmic reticulum membrane. Its pathway is glycolipid biosynthesis; glycosylphosphatidylinositol-anchor biosynthesis. In terms of biological role, ethanolamine phosphate transferase involved in glycosylphosphatidylinositol-anchor biosynthesis. Transfers ethanolamine phosphate to the GPI second mannose. Although not essential, addition of ethanolamine phosphate to the second mannose plays an important role in cell separation via the GPI-based modification of daughter-specific proteins. This Saccharomyces cerevisiae (strain ATCC 204508 / S288c) (Baker's yeast) protein is GPI ethanolamine phosphate transferase 2 (LAS21).